A 701-amino-acid polypeptide reads, in one-letter code: Elongation factor G (701 aa).

Residues 8–290 enclose the tr-type G domain; that stretch reads SLYRNIGISA…AVVELLPAPT (283 aa). GTP-binding positions include 17–24, 88–92, and 142–145; these read AHIDAGKT, DTPGH, and NKMD.

The protein belongs to the TRAFAC class translation factor GTPase superfamily. Classic translation factor GTPase family. EF-G/EF-2 subfamily.

Its subcellular location is the cytoplasm. In terms of biological role, catalyzes the GTP-dependent ribosomal translocation step during translation elongation. During this step, the ribosome changes from the pre-translocational (PRE) to the post-translocational (POST) state as the newly formed A-site-bound peptidyl-tRNA and P-site-bound deacylated tRNA move to the P and E sites, respectively. Catalyzes the coordinated movement of the two tRNA molecules, the mRNA and conformational changes in the ribosome. The protein is Elongation factor G of Neisseria meningitidis serogroup B (strain ATCC BAA-335 / MC58).